We begin with the raw amino-acid sequence, 240 residues long: Probable transcriptional regulatory protein HPP12_0160 (240 aa).

Belongs to the TACO1 family.

Its subcellular location is the cytoplasm. This Helicobacter pylori (strain P12) protein is Probable transcriptional regulatory protein HPP12_0160.